We begin with the raw amino-acid sequence, 313 residues long: MDTYARVIRNTVEVVTDEELRSLLDRPVRKVYAGYEPSGEIHLGHLVTINKLIDLRDAGFEVTVLLADLHAFLNRKGTMEEVKKLAEYNRRCFEGLGLTDIKYVLGSSFQLSPEYQILVHELSQAITLNRAKRSMDEVGRQMDNPTVSQMVYPIMQMADIAMLGVDAALGGIDQRKIHMLAREYLPSKNYPSPVCIHVPILQGLDGKKMSSSQGNYISVAESEEDIRKKMKKAFCPPEVEDNPVLQVLQHHIFPRLDTVTIERPEKFGGNRTFGSYEEMEQAYAKGEIHPADLKTAVAESLITILAPVREYLK.

Tyrosine 32 lines the L-tyrosine pocket. The 'HIGH' region signature appears at 37–45; the sequence is PSGEIHLGH. Positions 152, 156, 159, and 174 each coordinate L-tyrosine. Positions 208–212 match the 'KMSKS' region motif; it reads KMSSS. Residue serine 211 coordinates ATP.

Belongs to the class-I aminoacyl-tRNA synthetase family. TyrS type 3 subfamily. In terms of assembly, homodimer.

It is found in the cytoplasm. The enzyme catalyses tRNA(Tyr) + L-tyrosine + ATP = L-tyrosyl-tRNA(Tyr) + AMP + diphosphate + H(+). In terms of biological role, catalyzes the attachment of tyrosine to tRNA(Tyr) in a two-step reaction: tyrosine is first activated by ATP to form Tyr-AMP and then transferred to the acceptor end of tRNA(Tyr). The sequence is that of Tyrosine--tRNA ligase from Methanospirillum hungatei JF-1 (strain ATCC 27890 / DSM 864 / NBRC 100397 / JF-1).